We begin with the raw amino-acid sequence, 306 residues long: Ribosomal protein L11 methyltransferase (306 aa).

The S-adenosyl-L-methionine site is built by T154, G179, D201, and N242.

The protein belongs to the methyltransferase superfamily. PrmA family.

It is found in the cytoplasm. It catalyses the reaction L-lysyl-[protein] + 3 S-adenosyl-L-methionine = N(6),N(6),N(6)-trimethyl-L-lysyl-[protein] + 3 S-adenosyl-L-homocysteine + 3 H(+). In terms of biological role, methylates ribosomal protein L11. This is Ribosomal protein L11 methyltransferase from Stenotrophomonas maltophilia (strain R551-3).